We begin with the raw amino-acid sequence, 465 residues long: Iron-sulfur cluster assembly SufBD family protein SERP0500 (465 aa).

Belongs to the iron-sulfur cluster assembly SufBD family.

The polypeptide is Iron-sulfur cluster assembly SufBD family protein SERP0500 (Staphylococcus epidermidis (strain ATCC 35984 / DSM 28319 / BCRC 17069 / CCUG 31568 / BM 3577 / RP62A)).